The sequence spans 617 residues: Dihydroxy-acid dehydratase (617 aa).

Aspartate 81 contacts Mg(2+). Cysteine 122 is a [2Fe-2S] cluster binding site. Residues aspartate 123 and lysine 124 each contribute to the Mg(2+) site. N6-carboxylysine is present on lysine 124. Cysteine 195 serves as a coordination point for [2Fe-2S] cluster. Residue glutamate 491 coordinates Mg(2+). Catalysis depends on serine 517, which acts as the Proton acceptor.

This sequence belongs to the IlvD/Edd family. Homodimer. [2Fe-2S] cluster serves as cofactor. The cofactor is Mg(2+).

The enzyme catalyses (2R)-2,3-dihydroxy-3-methylbutanoate = 3-methyl-2-oxobutanoate + H2O. The catalysed reaction is (2R,3R)-2,3-dihydroxy-3-methylpentanoate = (S)-3-methyl-2-oxopentanoate + H2O. It participates in amino-acid biosynthesis; L-isoleucine biosynthesis; L-isoleucine from 2-oxobutanoate: step 3/4. The protein operates within amino-acid biosynthesis; L-valine biosynthesis; L-valine from pyruvate: step 3/4. Its function is as follows. Functions in the biosynthesis of branched-chain amino acids. Catalyzes the dehydration of (2R,3R)-2,3-dihydroxy-3-methylpentanoate (2,3-dihydroxy-3-methylvalerate) into 2-oxo-3-methylpentanoate (2-oxo-3-methylvalerate) and of (2R)-2,3-dihydroxy-3-methylbutanoate (2,3-dihydroxyisovalerate) into 2-oxo-3-methylbutanoate (2-oxoisovalerate), the penultimate precursor to L-isoleucine and L-valine, respectively. The chain is Dihydroxy-acid dehydratase from Hydrogenovibrio crunogenus (strain DSM 25203 / XCL-2) (Thiomicrospira crunogena).